The primary structure comprises 358 residues: D-alanine--D-alanine ligase B (358 aa).

The ATP-grasp domain occupies 147–352; the sequence is KYVLENFKFK…YSALIDELIE (206 aa). An ATP-binding site is contributed by 179 to 234; it reads VEKLQYDVFIKPANSGSSVGITKAHNKEELLKGLEEAFIHDKNVLVEEAINAREIE. Residues Asp-305, Glu-319, and Asn-321 each coordinate Mg(2+).

It belongs to the D-alanine--D-alanine ligase family. The cofactor is Mg(2+). Mn(2+) is required as a cofactor.

The protein localises to the cytoplasm. The catalysed reaction is 2 D-alanine + ATP = D-alanyl-D-alanine + ADP + phosphate + H(+). Its pathway is cell wall biogenesis; peptidoglycan biosynthesis. Its function is as follows. Cell wall formation. In Clostridium tetani (strain Massachusetts / E88), this protein is D-alanine--D-alanine ligase B.